Reading from the N-terminus, the 227-residue chain is Cytochrome c oxidase subunit 2 (227 aa).

Residues 1-14 (MAYPFQLGLQDATS) lie on the Mitochondrial intermembrane side of the membrane. The chain crosses the membrane as a helical span at residues 15–45 (PIMEELTNFHDHTLMIVFLISSLVLYIISSM). Residues 46–59 (LATKMTHTSTMDAQ) are Mitochondrial matrix-facing. A helical membrane pass occupies residues 60–87 (SMETIWTILPAVILVLIALPSLRILYMM). Over 88 to 227 (DEINNPVLTV…FFENWSASMI (140 aa)) the chain is Mitochondrial intermembrane. Cu cation-binding residues include His-161, Cys-196, Glu-198, Cys-200, His-204, and Met-207. Position 198 (Glu-198) interacts with Mg(2+).

This sequence belongs to the cytochrome c oxidase subunit 2 family. Component of the cytochrome c oxidase (complex IV, CIV), a multisubunit enzyme composed of 14 subunits. The complex is composed of a catalytic core of 3 subunits MT-CO1, MT-CO2 and MT-CO3, encoded in the mitochondrial DNA, and 11 supernumerary subunits COX4I, COX5A, COX5B, COX6A, COX6B, COX6C, COX7A, COX7B, COX7C, COX8 and NDUFA4, which are encoded in the nuclear genome. The complex exists as a monomer or a dimer and forms supercomplexes (SCs) in the inner mitochondrial membrane with NADH-ubiquinone oxidoreductase (complex I, CI) and ubiquinol-cytochrome c oxidoreductase (cytochrome b-c1 complex, complex III, CIII), resulting in different assemblies (supercomplex SCI(1)III(2)IV(1) and megacomplex MCI(2)III(2)IV(2)). Found in a complex with TMEM177, COA6, COX18, COX20, SCO1 and SCO2. Interacts with TMEM177 in a COX20-dependent manner. Interacts with COX20. Interacts with COX16. Requires Cu cation as cofactor.

It is found in the mitochondrion inner membrane. It carries out the reaction 4 Fe(II)-[cytochrome c] + O2 + 8 H(+)(in) = 4 Fe(III)-[cytochrome c] + 2 H2O + 4 H(+)(out). In terms of biological role, component of the cytochrome c oxidase, the last enzyme in the mitochondrial electron transport chain which drives oxidative phosphorylation. The respiratory chain contains 3 multisubunit complexes succinate dehydrogenase (complex II, CII), ubiquinol-cytochrome c oxidoreductase (cytochrome b-c1 complex, complex III, CIII) and cytochrome c oxidase (complex IV, CIV), that cooperate to transfer electrons derived from NADH and succinate to molecular oxygen, creating an electrochemical gradient over the inner membrane that drives transmembrane transport and the ATP synthase. Cytochrome c oxidase is the component of the respiratory chain that catalyzes the reduction of oxygen to water. Electrons originating from reduced cytochrome c in the intermembrane space (IMS) are transferred via the dinuclear copper A center (CU(A)) of subunit 2 and heme A of subunit 1 to the active site in subunit 1, a binuclear center (BNC) formed by heme A3 and copper B (CU(B)). The BNC reduces molecular oxygen to 2 water molecules using 4 electrons from cytochrome c in the IMS and 4 protons from the mitochondrial matrix. This is Cytochrome c oxidase subunit 2 (MT-CO2) from Acomys wilsoni (Wilson's spiny mouse).